Reading from the N-terminus, the 119-residue chain is UPF0344 protein lp_1373 (119 aa).

A run of 4 helical transmembrane segments spans residues methionine 1–leucine 21, phenylalanine 32–isoleucine 52, tryptophan 60–phenylalanine 80, and leucine 92–tryptophan 112.

The protein belongs to the UPF0344 family.

It is found in the cell membrane. The protein is UPF0344 protein lp_1373 of Lactiplantibacillus plantarum (strain ATCC BAA-793 / NCIMB 8826 / WCFS1) (Lactobacillus plantarum).